The following is a 457-amino-acid chain: UDP-N-acetylmuramoyl-tripeptide--D-alanyl-D-alanine ligase (457 aa).

109 to 115 (GSSGKTT) contributes to the ATP binding site.

It belongs to the MurCDEF family. MurF subfamily.

It is found in the cytoplasm. The enzyme catalyses D-alanyl-D-alanine + UDP-N-acetyl-alpha-D-muramoyl-L-alanyl-gamma-D-glutamyl-meso-2,6-diaminopimelate + ATP = UDP-N-acetyl-alpha-D-muramoyl-L-alanyl-gamma-D-glutamyl-meso-2,6-diaminopimeloyl-D-alanyl-D-alanine + ADP + phosphate + H(+). It participates in cell wall biogenesis; peptidoglycan biosynthesis. In terms of biological role, involved in cell wall formation. Catalyzes the final step in the synthesis of UDP-N-acetylmuramoyl-pentapeptide, the precursor of murein. In Haemophilus influenzae (strain ATCC 51907 / DSM 11121 / KW20 / Rd), this protein is UDP-N-acetylmuramoyl-tripeptide--D-alanyl-D-alanine ligase.